Consider the following 323-residue polypeptide: Beta-ketoacyl-[acyl-carrier-protein] synthase III 1 (323 aa).

Active-site residues include cysteine 114 and histidine 254. The segment at 255–259 (QANLR) is ACP-binding. Asparagine 284 is an active-site residue.

The protein belongs to the thiolase-like superfamily. FabH family. In terms of assembly, homodimer.

Its subcellular location is the cytoplasm. The enzyme catalyses malonyl-[ACP] + acetyl-CoA + H(+) = 3-oxobutanoyl-[ACP] + CO2 + CoA. The protein operates within lipid metabolism; fatty acid biosynthesis. Functionally, catalyzes the condensation reaction of fatty acid synthesis by the addition to an acyl acceptor of two carbons from malonyl-ACP. Catalyzes the first condensation reaction which initiates fatty acid synthesis and may therefore play a role in governing the total rate of fatty acid production. Possesses both acetoacetyl-ACP synthase and acetyl transacylase activities. Its substrate specificity determines the biosynthesis of branched-chain and/or straight-chain of fatty acids. In Lactiplantibacillus plantarum (strain ATCC BAA-793 / NCIMB 8826 / WCFS1) (Lactobacillus plantarum), this protein is Beta-ketoacyl-[acyl-carrier-protein] synthase III 1.